The following is a 329-amino-acid chain: Beta-ketoacyl-[acyl-carrier-protein] synthase III (329 aa).

Residues C123 and H256 contribute to the active site. The ACP-binding stretch occupies residues 257–261 (QANIR). Residue N286 is part of the active site.

It belongs to the thiolase-like superfamily. FabH family. As to quaternary structure, homodimer.

The protein resides in the cytoplasm. The catalysed reaction is malonyl-[ACP] + acetyl-CoA + H(+) = 3-oxobutanoyl-[ACP] + CO2 + CoA. It functions in the pathway lipid metabolism; fatty acid biosynthesis. Catalyzes the condensation reaction of fatty acid synthesis by the addition to an acyl acceptor of two carbons from malonyl-ACP. Catalyzes the first condensation reaction which initiates fatty acid synthesis and may therefore play a role in governing the total rate of fatty acid production. Possesses both acetoacetyl-ACP synthase and acetyl transacylase activities. Its substrate specificity determines the biosynthesis of branched-chain and/or straight-chain of fatty acids. This Burkholderia thailandensis (strain ATCC 700388 / DSM 13276 / CCUG 48851 / CIP 106301 / E264) protein is Beta-ketoacyl-[acyl-carrier-protein] synthase III.